The following is a 382-amino-acid chain: Mucosal addressin cell adhesion molecule 1 (382 aa).

A signal peptide spans 1 to 18; the sequence is MDFGLALLLAGLLGLLLG. At 19–317 the chain is on the extracellular side; sequence QSLQVKPLQV…TGSSKPAGDQ (299 aa). Ig-like domains follow at residues 23–112 and 113–231; these read VKPL…LLVY and AFPD…TSPE. 3 disulfides stabilise this stretch: Cys-47-Cys-94, Cys-51-Cys-98, and Cys-134-Cys-204. An N-linked (GlcNAc...) asparagine glycan is attached at Asn-83. The disordered stretch occupies residues 223–314; that stretch reads VLHSPTSPEP…VIPTGSSKPA (92 aa). Positions 226–317 are mucin-like; the sequence is SPTSPEPPDT…TGSSKPAGDQ (92 aa). The 1; truncated repeat unit spans residues 228-231; that stretch reads TSPE. The tract at residues 228–271 is 5.5 X 8 AA tandem repeats of [PS]-P-D-T-T-S-[QP]-E; sequence TSPEPPDTTSPESPDTTSPESPDTTSQEPPDTTSPEPPDKTSPE. Tandem repeats lie at residues 232–239, 240–247, 248–255, 256–263, and 264–271. The span at 236 to 261 shows a compositional bias: low complexity; it reads TSPESPDTTSPESPDTTSQEPPDTTS. The span at 277–288 shows a compositional bias: low complexity; it reads GSTHTPRSPGST. A helical transmembrane segment spans residues 318 to 338; the sequence is LPAALWTSSAVLGLLLLALPT. Residues 339–382 lie on the Cytoplasmic side of the membrane; it reads YHLWKRCRHLAEDDTHPPASLRLLPQVSAWAGLRGTGQVGISPS.

Homodimer. The Ser/Thr-rich mucin-like domain may provide possible sites for O-glycosylation. As to expression, highly expressed on high endothelial venules (HEV) and lamina propia venules found in the small intestine, and to a lesser extent in the colon and spleen. Very low levels of expression found in pancreas and brain. Not expressed in the thymus, prostate, ovaries, testis, heart, placenta, lung, liver, skeletal muscle, kidney or peripheral blood leukocytes.

It is found in the membrane. Cell adhesion leukocyte receptor expressed by mucosal venules, helps to direct lymphocyte traffic into mucosal tissues including the Peyer patches and the intestinal lamina propria. It can bind both integrin alpha-4/beta-7 and L-selectin, regulating both the passage and retention of leukocytes. Isoform 2, lacking the mucin-like domain, may be specialized in supporting integrin alpha-4/beta-7-dependent adhesion strengthening, independent of L-selectin binding. The sequence is that of Mucosal addressin cell adhesion molecule 1 (MADCAM1) from Homo sapiens (Human).